The following is a 569-amino-acid chain: ABC1 family protein MCP2 (569 aa).

A mitochondrion-targeting transit peptide spans 1 to 18 (MMTKAFFNKLPFEVFRRY). The Mitochondrial matrix segment spans residues 19–34 (VRTGKSIPQRSPRTRK). Residues 35–51 (SLLVGGTIASAVVLYNF) traverse the membrane as a helical segment. The Mitochondrial intermembrane portion of the chain corresponds to 52–569 (NDTFHDSVKH…KFIPKTWLSS (518 aa)).

Belongs to the protein kinase superfamily. ADCK protein kinase family.

The protein resides in the mitochondrion. Its subcellular location is the mitochondrion inner membrane. Functionally, component of MIOREX complexes, large expressome-like assemblies of ribosomes with factors involved in all the steps of post-transcriptional gene expression. Involved in mitochondrial lipid homeostasis. The protein is ABC1 family protein MCP2 of Saccharomyces cerevisiae (strain ATCC 204508 / S288c) (Baker's yeast).